The following is a 416-amino-acid chain: Probable glucan 1,3-beta-glucosidase A (416 aa).

The signal sequence occupies residues 1 to 22; sequence MIFKFSQKALVALYLVVGLAEA. The active-site Proton donor is the Glu-211. Intrachain disulfides connect Cys-291-Cys-415 and Cys-316-Cys-342. Glu-308 acts as the Nucleophile in catalysis. N-linked (GlcNAc...) asparagine glycosylation occurs at Asn-344.

This sequence belongs to the glycosyl hydrolase 5 (cellulase A) family. In terms of assembly, monomer. Mn(2+) is required as a cofactor.

It is found in the secreted. The catalysed reaction is Successive hydrolysis of beta-D-glucose units from the non-reducing ends of (1-&gt;3)-beta-D-glucans, releasing alpha-glucose.. In terms of biological role, beta-glucanases participate in the metabolism of beta-glucan, the main structural component of the cell wall. It could also function biosynthetically as a transglycosylase. The protein is Probable glucan 1,3-beta-glucosidase A (exgA) of Aspergillus fumigatus (strain CBS 144.89 / FGSC A1163 / CEA10) (Neosartorya fumigata).